The following is a 591-amino-acid chain: Probable Xaa-Pro aminopeptidase PEPP (591 aa).

The tract at residues 31 to 59 (SIHSPPPSVSAATHGGVKNPSFSQRRTSG) is disordered. Mn(2+) is bound by residues Asp-322 and Asp-333. Positions 441 to 450 (GLSRQAISGS) are enriched in low complexity. The segment at 441–460 (GLSRQAISGSRRLPPPRNMK) is disordered. Mn(2+) is bound by residues Glu-511 and Glu-552.

Belongs to the peptidase M24B family. Mn(2+) serves as cofactor.

It catalyses the reaction Release of any N-terminal amino acid, including proline, that is linked to proline, even from a dipeptide or tripeptide.. Catalyzes the removal of a penultimate prolyl residue from the N-termini of peptides. The protein is Probable Xaa-Pro aminopeptidase PEPP (PEPP) of Sordaria macrospora (strain ATCC MYA-333 / DSM 997 / K(L3346) / K-hell).